We begin with the raw amino-acid sequence, 517 residues long: Type II methyltransferase M.CeqI (517 aa).

Disordered stretches follow at residues 1-21 and 33-62; these read MVVT…RWPR and GRPR…HGRS. Residues 51 to 62 are compositionally biased toward basic residues; the sequence is RPRRGRAPHGRS. TPR repeat units follow at residues 283-316, 361-394, and 476-509; these read AEFY…FENN, ALLL…GDHS, and SELA…RTNM.

It catalyses the reaction a 2'-deoxyadenosine in DNA + S-adenosyl-L-methionine = an N(6)-methyl-2'-deoxyadenosine in DNA + S-adenosyl-L-homocysteine + H(+). Its function is as follows. A methylase, recognizes the double-stranded sequence 5'-GATATC-3', methylates A-? on both strands, and protects the DNA from cleavage by the CeqI endonuclease. The polypeptide is Type II methyltransferase M.CeqI (ceqIM) (Rhodococcus hoagii (Corynebacterium equii)).